The chain runs to 811 residues: Glycerol-3-phosphate acyltransferase (811 aa).

Positions 303–308 (CHRSHM) match the HXXXXD motif motif.

Belongs to the GPAT/DAPAT family.

The protein localises to the cell inner membrane. It carries out the reaction sn-glycerol 3-phosphate + an acyl-CoA = a 1-acyl-sn-glycero-3-phosphate + CoA. The protein operates within phospholipid metabolism; CDP-diacylglycerol biosynthesis; CDP-diacylglycerol from sn-glycerol 3-phosphate: step 1/3. The protein is Glycerol-3-phosphate acyltransferase of Glaesserella parasuis serovar 5 (strain SH0165) (Haemophilus parasuis).